The following is a 355-amino-acid chain: MAASAAVFLRLRSGLRQGARGLCARLATPPPRAPDQAAEIGSRAGTKAQTQGPQQQRSSEGPSYAKKVALWLARLLGAGGTVSVIYIFGNNAVDENGAKIPDEFDNDPILVQQLRRTYKYFKDYRQMIIEPTSPCLLPDPLREPYYQPPYTLVLELTGVLLHPEWSLATGWRFKKRPGIETLFQQLAPLYEIVIFTSETGMTAFPLIDSVDPHGFISYRLFRDATRYMDGHHVKDISCLNRDPARVVVVDCKKEAFRLQPYNGVALRPWDGNSDDRVLLDLSAFLKTIALNGVEDVRTVLEHYALEEDPLEAFKQRQSRLEQEEQQRLAELSKSSKQNLFFSSLTSRLWPRSKQP.

Residues 1-44 (MAASAAVFLRLRSGLRQGARGLCARLATPPPRAPDQAAEIGSRA) constitute a mitochondrion transit peptide. The segment at 25–61 (RLATPPPRAPDQAAEIGSRAGTKAQTQGPQQQRSSEG) is disordered. Over 45–67 (GTKAQTQGPQQQRSSEGPSYAKK) the chain is Mitochondrial matrix. A compositionally biased stretch (polar residues) spans 47–61 (KAQTQGPQQQRSSEG). A helical membrane pass occupies residues 68 to 88 (VALWLARLLGAGGTVSVIYIF). Topologically, residues 89–355 (GNNAVDENGA…SRLWPRSKQP (267 aa)) are mitochondrial intermembrane. Residues 145-288 (YYQPPYTLVL…LDLSAFLKTI (144 aa)) form the FCP1 homology domain. The residue at position 343 (S343) is a Phosphoserine.

Belongs to the TIM50 family. In terms of assembly, component of the TIM23 complex at least composed of TIMM23, TIMM17 (TIMM17A or TIMM17B) and TIMM50; within this complex, directly interacts with TIMM23. The complex interacts with the TIMM44 component of the PAM complex and with DNAJC15.

Its subcellular location is the mitochondrion inner membrane. Functionally, essential component of the TIM23 complex, a complex that mediates the translocation of transit peptide-containing proteins across the mitochondrial inner membrane. Has some phosphatase activity in vitro; however such activity may not be relevant in vivo. This chain is Mitochondrial import inner membrane translocase subunit TIM50 (TIMM50), found in Bos taurus (Bovine).